A 147-amino-acid polypeptide reads, in one-letter code: NADH-quinone oxidoreductase subunit A (147 aa).

Transmembrane regions (helical) follow at residues I11 to L31, L68 to V88, and L93 to A113.

The protein belongs to the complex I subunit 3 family. NDH-1 is composed of 14 different subunits. Subunits NuoA, H, J, K, L, M, N constitute the membrane sector of the complex.

Its subcellular location is the cell inner membrane. The enzyme catalyses a quinone + NADH + 5 H(+)(in) = a quinol + NAD(+) + 4 H(+)(out). NDH-1 shuttles electrons from NADH, via FMN and iron-sulfur (Fe-S) centers, to quinones in the respiratory chain. The immediate electron acceptor for the enzyme in this species is believed to be ubiquinone. Couples the redox reaction to proton translocation (for every two electrons transferred, four hydrogen ions are translocated across the cytoplasmic membrane), and thus conserves the redox energy in a proton gradient. The protein is NADH-quinone oxidoreductase subunit A of Nitrosospira multiformis (strain ATCC 25196 / NCIMB 11849 / C 71).